The following is a 139-amino-acid chain: Transcription antitermination protein NusB (139 aa).

It belongs to the NusB family.

In terms of biological role, involved in transcription antitermination. Required for transcription of ribosomal RNA (rRNA) genes. Binds specifically to the boxA antiterminator sequence of the ribosomal RNA (rrn) operons. The sequence is that of Transcription antitermination protein NusB from Salmonella agona (strain SL483).